A 975-amino-acid chain; its full sequence is Translation initiation factor IF-2 (975 aa).

2 stretches are compositionally biased toward basic and acidic residues: residues 48 to 63 (DHLR…DKRK) and 120 to 177 (AELK…EAAA). Disordered regions lie at residues 48–85 (DHLR…KART) and 98–390 (KRDD…PTEP). Positions 178–211 (KRAAAAQAEAAQQAAAAREQAQRAQSEPAEQSAQ) are enriched in low complexity. A compositionally biased stretch (basic and acidic residues) spans 212–263 (DEARAAAERAAQREAAKKAEDAAREAADKARAEQEEIRKRREAAEAEARAIR). Residues 302–330 (KPAGEAAAARPAAKKPASGAPAPAAAPAG) show a composition bias toward low complexity. Residues 359-372 (SSGGVDRGWRGGPK) are compositionally biased toward gly residues. The region spanning 475-644 (PRPPVVTVMG…LLQAEVLELK (170 aa)) is the tr-type G domain. A G1 region spans residues 484–491 (GHVDHGKT). Residue 484-491 (GHVDHGKT) coordinates GTP. Residues 509-513 (GITQH) are G2. Residues 530–533 (DTPG) form a G3 region. GTP-binding positions include 530–534 (DTPGH) and 584–587 (NKID). The interval 584–587 (NKID) is G4. The tract at residues 620–622 (SAK) is G5.

It belongs to the TRAFAC class translation factor GTPase superfamily. Classic translation factor GTPase family. IF-2 subfamily.

It localises to the cytoplasm. One of the essential components for the initiation of protein synthesis. Protects formylmethionyl-tRNA from spontaneous hydrolysis and promotes its binding to the 30S ribosomal subunits. Also involved in the hydrolysis of GTP during the formation of the 70S ribosomal complex. This chain is Translation initiation factor IF-2, found in Burkholderia pseudomallei (strain 1106a).